Consider the following 283-residue polypeptide: Transcription factor bHLH104 (283 aa).

The disordered stretch occupies residues 96–134; that stretch reads VEINSGSSGGAVKEEQEHLDDDCSRKRARTGSCSRGGGT. Over residues 107–120 the composition is skewed to basic and acidic residues; that stretch reads VKEEQEHLDDDCSR. Positions 130–181 constitute a bHLH domain; it reads RGGGTKACRERLRREKLNERFMDLSSVLEPGRTPKTDKPAILDDAIRILNQL.

In terms of assembly, homodimer. Interacts with BTS and BHLH47/PYE.

It is found in the nucleus. The polypeptide is Transcription factor bHLH104 (BHLH104) (Arabidopsis thaliana (Mouse-ear cress)).